The following is a 521-amino-acid chain: uncharacterized protein (521 aa).

The interval 1-25 (MLQRSLGVNGRKLAMSARSAKRERK) is disordered. The next 6 helical transmembrane spans lie at 68–88 (GAVW…GAVL), 114–134 (VLIV…SLTV), 160–180 (VVLA…HTVG), 192–212 (VAVT…IYFL), 290–310 (ALLV…GWCW), and 399–419 (LLFW…CAQI).

It localises to the cell membrane. This is an uncharacterized protein from Mycobacterium tuberculosis (strain CDC 1551 / Oshkosh).